The following is a 469-amino-acid chain: Glutamine synthetase (469 aa).

The region spanning 15-96 (NDVKFIDVRF…INFFIHDPIT (82 aa)) is the GS beta-grasp domain. The region spanning 104–469 (PRNIAKKAEA…PHEFELYFDI (366 aa)) is the GS catalytic domain. The Mg(2+) site is built by Glu-129 and Glu-131. Residue Glu-205 coordinates ATP. Mg(2+) is bound by residues Glu-210 and Glu-218. 221–223 (YKF) contributes to the ATP binding site. L-glutamate contacts are provided by residues 262–263 (NG) and Gly-263. His-267 is a binding site for Mg(2+). ATP-binding positions include 269-271 (HQS) and Ser-271. Arg-320, Glu-326, and Arg-338 together coordinate L-glutamate. 3 residues coordinate ATP: Arg-338, Arg-343, and Lys-352. Residue Glu-357 coordinates Mg(2+). L-glutamate is bound at residue Arg-359. Tyr-397 is subject to O-AMP-tyrosine.

The protein belongs to the glutamine synthetase family. As to quaternary structure, oligomer of 12 subunits arranged in the form of two hexagons. Mg(2+) serves as cofactor.

Its subcellular location is the cytoplasm. It catalyses the reaction L-glutamate + NH4(+) + ATP = L-glutamine + ADP + phosphate + H(+). With respect to regulation, the activity of this enzyme could be controlled by adenylation under conditions of abundant glutamine. In terms of biological role, catalyzes the ATP-dependent biosynthesis of glutamine from glutamate and ammonia. This Streptomyces filamentosus (Streptomyces roseosporus) protein is Glutamine synthetase.